Here is an 862-residue protein sequence, read N- to C-terminus: Protein SEY1 (862 aa).

Residues 1–743 lie on the Cytoplasmic side of the membrane; that stretch reads MASNGHFSSV…KRSAIGGITQ (743 aa). Positions 48-301 constitute a GB1/RHD3-type G domain; it reads GFNYHLISVF…IPADGFAVYA (254 aa). A GTP-binding site is contributed by 58–65; the sequence is GSQSTGKS. Residues 476–500 are a coiled coil; it reads SDYKQELSLFQKDLEKISSQLRKDE. The helical transmembrane segment at 744–764 threads the bilayer; that stretch reads VPLYFYGLLLALGWNEIIAVL. Over 765–767 the chain is Lumenal; it reads RNP. The helical transmembrane segment at 768–788 threads the bilayer; sequence IYFIFLLLIGVGAYVTFRLNL. The Cytoplasmic segment spans residues 789-862; the sequence is WGPMINMAEA…TSDDDNDDDL (74 aa). Residues 818-862 are disordered; the sequence is SDSGRQAMAMSGRNARGTEEYEMSSNLKSKGRRTDTSDDDNDDDL.

It belongs to the TRAFAC class dynamin-like GTPase superfamily. GB1/RHD3 GTPase family. RHD3 subfamily.

The protein localises to the endoplasmic reticulum membrane. Functionally, cooperates with the reticulon proteins and tubule-shaping DP1 family proteins to generate and maintain the structure of the tubular endoplasmic reticulum network. Has GTPase activity, which is required for its function in ER organization. In Arthroderma otae (strain ATCC MYA-4605 / CBS 113480) (Microsporum canis), this protein is Protein SEY1.